Here is a 380-residue protein sequence, read N- to C-terminus: Chaperone protein DnaJ (380 aa).

Residues 5 to 72 enclose the J domain; that stretch reads DYYETLGVAK…QKRAAYDQYG (68 aa). The segment at 140 to 218 adopts a CR-type zinc-finger fold; sequence GKDTQIRIPS…CNGAGRIKSN (79 aa). Residues cysteine 153, cysteine 156, cysteine 170, cysteine 173, cysteine 192, cysteine 195, cysteine 206, and cysteine 209 each coordinate Zn(2+). CXXCXGXG motif repeat units lie at residues 153 to 160, 170 to 177, 192 to 199, and 206 to 213; these read CSTCDGTG, CPTCSGSG, CPSCHGTG, and CTACNGAG. Positions 357 to 380 are disordered; it reads LKKGGERHSPNAKSWTDRVKDLFK.

Belongs to the DnaJ family. As to quaternary structure, homodimer. Zn(2+) serves as cofactor.

It is found in the cytoplasm. Functionally, participates actively in the response to hyperosmotic and heat shock by preventing the aggregation of stress-denatured proteins and by disaggregating proteins, also in an autonomous, DnaK-independent fashion. Unfolded proteins bind initially to DnaJ; upon interaction with the DnaJ-bound protein, DnaK hydrolyzes its bound ATP, resulting in the formation of a stable complex. GrpE releases ADP from DnaK; ATP binding to DnaK triggers the release of the substrate protein, thus completing the reaction cycle. Several rounds of ATP-dependent interactions between DnaJ, DnaK and GrpE are required for fully efficient folding. Also involved, together with DnaK and GrpE, in the DNA replication of plasmids through activation of initiation proteins. The protein is Chaperone protein DnaJ of Methylibium petroleiphilum (strain ATCC BAA-1232 / LMG 22953 / PM1).